The chain runs to 813 residues: G-type lectin S-receptor-like serine/threonine-protein kinase LECRK1 (813 aa).

The first 19 residues, 1 to 19, serve as a signal peptide directing secretion; that stretch reads MVALLLFPMLLQLLSPTCA. At 20 to 466 the chain is on the extracellular side; it reads QTQKNITLGS…NRKHWVLGSS (447 aa). A Bulb-type lectin domain is found at 22–149; it reads QKNITLGSTL…DGTTKWQTFD (128 aa). N-linked (GlcNAc...) asparagine glycans are attached at residues Asn24, Asn57, Asn164, Asn168, Asn219, and Asn242. An EGF-like; atypical domain is found at 293–346; that stretch reads PQNICHAIVSDVGSGVCGFNSYCTFDGTRNQIASCQCPPWYKFFDEQKKYKGCK. Disulfide bonds link Cys297/Cys315, Cys309/Cys327, Cys329/Cys345, Cys391/Cys413, and Cys395/Cys401. One can recognise a PAN domain in the interval 354-433; it reads CDLDEATALA…NMADYVQRTV (80 aa). Asn407 and Asn441 each carry an N-linked (GlcNAc...) asparagine glycan. A helical membrane pass occupies residues 467–487; the sequence is LILGTSILVNFALISIFLFGT. The Cytoplasmic portion of the chain corresponds to 488-813; sequence YCRIATKKNI…DPCSFISSLP (326 aa). The Protein kinase domain maps to 523 to 797; it reads AGFHEILGAG…KVTQMLDGAV (275 aa). ATP contacts are provided by residues 529–537 and Lys553; that span reads LGAGASGVV. Asp647 serves as the catalytic Proton acceptor.

It belongs to the protein kinase superfamily. Ser/Thr protein kinase family.

It localises to the membrane. It carries out the reaction L-seryl-[protein] + ATP = O-phospho-L-seryl-[protein] + ADP + H(+). The catalysed reaction is L-threonyl-[protein] + ATP = O-phospho-L-threonyl-[protein] + ADP + H(+). Functionally, involved in innate immunity. Required for the expression of defense-related genes PR1A, LOX2 and CHS1 upon biotic stresses. Required for basal resistance to the fungal blast (M.grisea), bacterial blight (X.oryzae pv. oryzae, Xoo) and the herbivorous insect brown planthopper (N.lugens, BPH). May be involved in several defense signaling pathways. Involved in the promotion of seed germination. Required for the expression of alpha-amylase genes during seed germination. Involved in resistance against the herbivorous insect brown planthopper (N.lugens, BPH). Member of the BPH3 (BPH resistance locus 3) cluster which contains LECRK1, LECRK2 and LECRK3. The protein is G-type lectin S-receptor-like serine/threonine-protein kinase LECRK1 of Oryza sativa subsp. japonica (Rice).